Consider the following 337-residue polypeptide: Ornithine carbamoyltransferase, catabolic (337 aa).

Carbamoyl phosphate is bound by residues 57–60 (STRT), Q84, R108, and 135–138 (HPTQ). Residues N167, D231, and 235–236 (SM) each bind L-ornithine. Carbamoyl phosphate contacts are provided by residues 272–273 (CL) and R317.

This sequence belongs to the aspartate/ornithine carbamoyltransferase superfamily. OTCase family.

It localises to the cytoplasm. It carries out the reaction carbamoyl phosphate + L-ornithine = L-citrulline + phosphate + H(+). The protein operates within amino-acid degradation; L-arginine degradation via ADI pathway; carbamoyl phosphate from L-arginine: step 2/2. Its function is as follows. Reversibly catalyzes the transfer of the carbamoyl group from carbamoyl phosphate (CP) to the N(epsilon) atom of ornithine (ORN) to produce L-citrulline. The chain is Ornithine carbamoyltransferase, catabolic from Streptococcus ratti.